The chain runs to 116 residues: Putative antiporter subunit mnhC2 (116 aa).

The next 3 membrane-spanning stretches (helical) occupy residues 3-23 (LILL…ILSV), 28-48 (IVIG…SMGN), and 72-92 (AIVL…LVLV).

It belongs to the CPA3 antiporters (TC 2.A.63) subunit C family. May form a heterooligomeric complex that consists of seven subunits: mnhA2, mnhB2, mnhC2, mnhD2, mnhE2, mnhF2 and mnhG2.

The protein localises to the cell membrane. The polypeptide is Putative antiporter subunit mnhC2 (mnhC2) (Staphylococcus saprophyticus subsp. saprophyticus (strain ATCC 15305 / DSM 20229 / NCIMB 8711 / NCTC 7292 / S-41)).